The chain runs to 500 residues: Inner membrane transporter YjeM (500 aa).

At 1-7 the chain is on the cytoplasmic side; it reads MPHTIKK. Residues 8 to 28 form a helical membrane-spanning segment; that stretch reads MSLIGLILMIFTSVFGFANSP. At 29–37 the chain is on the periplasmic side; that stretch reads SAYYLMGYS. A helical membrane pass occupies residues 38 to 58; that stretch reads AIPFYIFSALLFFIPFALMMA. The Cytoplasmic segment spans residues 59–82; sequence EMGAAYRKEEGGIYSWMNNSVGPR. Residues 83–103 form a helical membrane-spanning segment; the sequence is FAFIGTFMWFSSYIIWMVSTS. Topologically, residues 104–132 are periplasmic; the sequence is AKVWVPFSTFLYGSDMTQHWRIAGLEPTQ. Residues 133–153 form a helical membrane-spanning segment; it reads VVGLLAVAWMILVTVVASKGI. Over 154–163 the chain is Cytoplasmic; sequence NKIARITAVG. The helical transmembrane segment at 164–184 threads the bilayer; it reads GIAVMCLNLVLLLVSITILLL. The Periplasmic portion of the chain corresponds to 185-209; it reads NGGHFAQDINFLASPNPGYQSGLAM. Residues 210-230 form a helical membrane-spanning segment; that stretch reads LSFVVFAIFAYGGIEAVGGLV. Topologically, residues 231–243 are cytoplasmic; sequence DKTENPEKNFAKG. The chain crosses the membrane as a helical span at residues 244 to 264; that stretch reads IVFAAIVISIGYSLAIFLWGV. Over 265-319 the chain is Periplasmic; sequence STNWQQVLSNGSVNLGNITYVLMKSLGMTLGNALHLSPEASLSLGVWFARITGLS. Residues 320–340 form a helical membrane-spanning segment; sequence MFLAYTGAFFTLCYSPLKAII. Topologically, residues 341-369 are cytoplasmic; the sequence is QGTPKALWPEPMTRLNAMGMPSIAMWMQC. A helical membrane pass occupies residues 370 to 390; the sequence is GLVTVFILLVSFGGGTASAFF. The Periplasmic segment spans residues 391–394; the sequence is NKLT. A helical membrane pass occupies residues 395–415; that stretch reads LMANVSMTLPYLFLALAFPFF. Residues 416–433 are Cytoplasmic-facing; the sequence is KARQDLDRPFVIFKTHLS. A helical transmembrane segment spans residues 434-454; that stretch reads AMIATVVVVLVVTFANVFTII. The Periplasmic portion of the chain corresponds to 455–462; that stretch reads QPVVEAGD. The helical transmembrane segment at 463-483 threads the bilayer; sequence WDSTLWMIGGPVFFSLLAMAI. Topologically, residues 484 to 500 are cytoplasmic; it reads YQNYCSRVAKNPQWAVE.

This sequence belongs to the amino acid-polyamine-organocation (APC) superfamily.

The protein localises to the cell inner membrane. The protein is Inner membrane transporter YjeM (yjeM) of Escherichia coli (strain K12).